The following is an 87-amino-acid chain: Beta-toxin Cn5 (87 aa).

Residues 1–19 form the signal peptide; sequence MNSLLMITACLFLIGTVWA. Residues 20-85 enclose the LCN-type CS-alpha/beta domain; that stretch reads KEGYLVNKST…TYPLPNKSCS (66 aa). Cystine bridges form between Cys-31-Cys-84, Cys-35-Cys-60, Cys-44-Cys-65, and Cys-48-Cys-67.

Belongs to the long (4 C-C) scorpion toxin superfamily. Sodium channel inhibitor family. Beta subfamily. Expressed by the venom gland.

Its subcellular location is the secreted. Functionally, beta toxins bind voltage-independently at site-4 of sodium channels (Nav) and shift the voltage of activation toward more negative potentials thereby affecting sodium channel activation and promoting spontaneous and repetitive firing. This toxin is lethal to crustaceans (freshwater crayfish (Cambarellus montezumae spp.)), it provokes a reversible paralysis to insects (crickets (Achaeta spp.)), but is not toxic to mice. At high concentrations, it does displace the (beta) mammal-specific toxin Cn2 from rat brain synaptosomes. This Centruroides noxius (Mexican scorpion) protein is Beta-toxin Cn5.